Reading from the N-terminus, the 207-residue chain is Large ribosomal subunit protein bL25 (207 aa).

Belongs to the bacterial ribosomal protein bL25 family. CTC subfamily. As to quaternary structure, part of the 50S ribosomal subunit; part of the 5S rRNA/L5/L18/L25 subcomplex. Contacts the 5S rRNA. Binds to the 5S rRNA independently of L5 and L18.

Its function is as follows. This is one of the proteins that binds to the 5S RNA in the ribosome where it forms part of the central protuberance. In Rhizorhabdus wittichii (strain DSM 6014 / CCUG 31198 / JCM 15750 / NBRC 105917 / EY 4224 / RW1) (Sphingomonas wittichii), this protein is Large ribosomal subunit protein bL25.